The following is a 228-amino-acid chain: Orotidine 5'-phosphate decarboxylase (228 aa).

Residues D8, K30, 59–68 (DLKLHDIPNT), T118, R178, Q187, G207, and R208 contribute to the substrate site. K61 (proton donor) is an active-site residue.

This sequence belongs to the OMP decarboxylase family. Type 1 subfamily. In terms of assembly, homodimer.

The catalysed reaction is orotidine 5'-phosphate + H(+) = UMP + CO2. It participates in pyrimidine metabolism; UMP biosynthesis via de novo pathway; UMP from orotate: step 2/2. Catalyzes the decarboxylation of orotidine 5'-monophosphate (OMP) to uridine 5'-monophosphate (UMP). This is Orotidine 5'-phosphate decarboxylase from Wolinella succinogenes (strain ATCC 29543 / DSM 1740 / CCUG 13145 / JCM 31913 / LMG 7466 / NCTC 11488 / FDC 602W) (Vibrio succinogenes).